Here is a 432-residue protein sequence, read N- to C-terminus: Transcriptional adapter 3 (432 aa).

Residue lysine 21 forms a Glycyl lysine isopeptide (Lys-Gly) (interchain with G-Cter in SUMO2) linkage. Residues 40–69 (IEELDTLQLELETLLSSASRRLRVLEAETQ) adopt a coiled-coil conformation. The segment at 87-127 (GRDHELGAPPKHGKPKKQKLEGKTGHGPGPGPGRPKSKNVQ) is disordered. A Glycyl lysine isopeptide (Lys-Gly) (interchain with G-Cter in SUMO2) cross-link involves residue lysine 129. Residues 272 to 319 (NIISPMEDSPIPDMSGKESGADGASTSPRNQNKPFSVPHTKSLESRIK) form a disordered region. Phosphoserine occurs at positions 280 and 298. The span at 295 to 305 (ASTSPRNQNKP) shows a compositional bias: polar residues. Residues 367–407 (LLRLAKEEVSRQELRQRVRMADNEVMDAFRKIMAARQKKRT) adopt a coiled-coil conformation. Lysine 418 is modified (N6-acetyllysine).

Belongs to the NGG1 family. In terms of assembly, the PCAF complex is composed of a number of TBP-associated factors (TAFS), such as TAF5, TAF5L, TAF6, TAF6L, TAF9, TAF10 and TAF12, PCAF, and also PCAF-associated factors (PAFs), such as TADA2L/ADA2, TADA3L/ADA3 and SPT3. Interacts directly with TADA2L and PCAF and also with the high-risk HPV oncoprotein E6. Component of the STAGA transcription coactivator-HAT complex, at least composed of SUPT3H, GCN5L2, TAF5L, TAF6L, SUPT7L, TADA3L, TAD1L, TAF10, TAF12, TRRAP and TAF9. Component of the TFTC-HAT complex. Component of the ADA2A-containing complex (ATAC), composed of KAT14, KAT2A, TADA2L, TADA3L, ZZ3, MBIP, WDR5, YEATS2, CCDC101 and DR1.

The protein localises to the nucleus. Functions as a component of the PCAF complex. The PCAF complex is capable of efficiently acetylating histones in a nucleosomal context. The PCAF complex could be considered as the human version of the yeast SAGA complex. Also known as a coactivator for p53/TP53-dependent transcriptional activation. Component of the ATAC complex, a complex with histone acetyltransferase activity on histones H3 and H4. The polypeptide is Transcriptional adapter 3 (Tada3) (Mus musculus (Mouse)).